A 349-amino-acid chain; its full sequence is UDP-N-acetylenolpyruvoylglucosamine reductase (349 aa).

Residues 25–213 (VGPVARRLVT…VEQGERTDPQ (189 aa)) form the FAD-binding PCMH-type domain. Residue arginine 165 is part of the active site. The Proton donor role is filled by serine 242. Residue glutamate 341 is part of the active site.

It belongs to the MurB family. It depends on FAD as a cofactor.

The protein resides in the cytoplasm. It catalyses the reaction UDP-N-acetyl-alpha-D-muramate + NADP(+) = UDP-N-acetyl-3-O-(1-carboxyvinyl)-alpha-D-glucosamine + NADPH + H(+). It functions in the pathway cell wall biogenesis; peptidoglycan biosynthesis. Functionally, cell wall formation. The polypeptide is UDP-N-acetylenolpyruvoylglucosamine reductase (Mycolicibacterium gilvum (strain PYR-GCK) (Mycobacterium gilvum (strain PYR-GCK))).